A 91-amino-acid polypeptide reads, in one-letter code: Small ribosomal subunit protein uS19m (91 aa).

The protein belongs to the universal ribosomal protein uS19 family. Component of the mitochondrial small ribosomal subunit (mt-SSU). Mature N.crassa 74S mitochondrial ribosomes consist of a small (37S) and a large (54S) subunit. The 37S small subunit contains a 16S ribosomal RNA (16S mt-rRNA) and 32 different proteins. The 54S large subunit contains a 23S rRNA (23S mt-rRNA) and 42 different proteins.

The protein localises to the mitochondrion. Its function is as follows. Component of the mitochondrial ribosome (mitoribosome), a dedicated translation machinery responsible for the synthesis of mitochondrial genome-encoded proteins, including at least some of the essential transmembrane subunits of the mitochondrial respiratory chain. The mitoribosomes are attached to the mitochondrial inner membrane and translation products are cotranslationally integrated into the membrane. The protein is Small ribosomal subunit protein uS19m (rsm19) of Neurospora crassa (strain ATCC 24698 / 74-OR23-1A / CBS 708.71 / DSM 1257 / FGSC 987).